Reading from the N-terminus, the 272-residue chain is Ribosomal RNA small subunit methyltransferase A (272 aa).

Residues histidine 11, leucine 13, glycine 38, glutamate 59, aspartate 84, and asparagine 109 each contribute to the S-adenosyl-L-methionine site.

This sequence belongs to the class I-like SAM-binding methyltransferase superfamily. rRNA adenine N(6)-methyltransferase family. RsmA subfamily.

Its subcellular location is the cytoplasm. It carries out the reaction adenosine(1518)/adenosine(1519) in 16S rRNA + 4 S-adenosyl-L-methionine = N(6)-dimethyladenosine(1518)/N(6)-dimethyladenosine(1519) in 16S rRNA + 4 S-adenosyl-L-homocysteine + 4 H(+). In terms of biological role, specifically dimethylates two adjacent adenosines (A1518 and A1519) in the loop of a conserved hairpin near the 3'-end of 16S rRNA in the 30S particle. May play a critical role in biogenesis of 30S subunits. The chain is Ribosomal RNA small subunit methyltransferase A from Rippkaea orientalis (strain PCC 8801 / RF-1) (Cyanothece sp. (strain PCC 8801)).